We begin with the raw amino-acid sequence, 1383 residues long: Cell surface hyaluronidase (1383 aa).

Residues 1 to 76 form a disordered region; the sequence is MYAAGSRGHS…QRTPSESRKR (76 aa). The Cytoplasmic segment spans residues 1–82; it reads MYAAGSRGHS…SRKRKRHKNT (82 aa). A phosphoserine mark is found at S10, S53, and S63. A helical; Signal-anchor for type II membrane protein membrane pass occupies residues 83–103; it reads FICFAITSFSFFVALAVILGI. At 104–1383 the chain is on the extracellular side; that stretch reads SSKYAPDENC…DLLQQALKVL (1280 aa). A G8 domain is found at 121-245; it reads RNWDPGQDSA…QRTSWTMLAR (125 aa). The GG-type lectin 1 domain maps to 255–412; the sequence is GSYAFEKDFS…ISLSGFRVDI (158 aa). The N-linked (GlcNAc...) asparagine glycan is linked to N292. 3 PbH1 repeats span residues 669-691, 711-733, and 791-812; these read HPNN…WYLF, TPLG…FVDK, and GGDI…TFAS. N914 and N1234 each carry an N-linked (GlcNAc...) asparagine glycan. Positions 1208-1366 constitute a GG-type lectin 2 domain; sequence KSYLPVRFQS…MEEYGCSRTG (159 aa).

This sequence belongs to the CEMIP family. Requires Ca(2+) as cofactor. Widely expressed. Strongly expressed in endothelial cells in the subcapsular sinus of lymph nodes and in the liver sinusoid, two primary sites implicated in systemic hyaluronan turnover.

It is found in the cell membrane. It carries out the reaction Random hydrolysis of (1-&gt;4)-linkages between N-acetyl-beta-D-glucosamine and D-glucuronate residues in hyaluronate.. In terms of biological role, cell surface hyaluronidase that mediates the initial cleavage of extracellular high-molecular-weight hyaluronan into intermediate-size hyaluronan of approximately 5 kDa fragments. Very specific to hyaluronan; not able to cleave chondroitin sulfate or dermatan sulfate. Has an essential function in systemic hyaluronan catabolism and turnover and regulates cell adhesion and migration via hyaluronan degradation at focal adhesion sites. Acts as a regulator of angiogenesis and heart morphogenesis by mediating degradation of extracellular hyaluronan, thereby regulating VEGF signaling. The protein is Cell surface hyaluronidase of Mus musculus (Mouse).